Reading from the N-terminus, the 92-residue chain is Protein S100-A12 (92 aa).

2 EF-hand domains span residues 13-48 (NIFHQYSVRKGHFDTLSKGELKQLLTKELANTIKNI) and 49-84 (KDKAVIDEIFQGLDANQDEQVDFQEFISLVAIALKA). Residue His-16 participates in Cu cation binding. His-16 is a Zn(2+) binding site. Residues Ser-19, Lys-22, and His-24 each coordinate Ca(2+). Asp-26 lines the Cu cation pocket. A Zn(2+)-binding site is contributed by Asp-26. Ca(2+)-binding residues include Thr-27 and Glu-32. Positions 38 to 53 (TKELANTIKNIKDKAV) are hinge domain. Asp-62, Asn-64, Asp-66, Gln-68, and Glu-73 together coordinate Ca(2+). His-86 and His-90 together coordinate Cu cation. Zn(2+)-binding residues include His-86 and His-90.

This sequence belongs to the S-100 family. In terms of assembly, homodimer. Homooligomer (tetramer or hexamer) in the presence of calcium, zinc and copper ions. Interacts with AGER and both calcium and zinc are essential for the interaction. Interacts with CACYBP in a calcium-dependent manner. In terms of tissue distribution, predominantly expressed by neutrophils, monocytes and activated macrophages. Expressed by eosinophils and macrophages in asthmatic airways in regions where mast cells accumulate. Found in high concentrations in the serum of patients suffering from various inflammatory disorders, such as rheumatoid arthritis, psoriatic arthritis, Crohn's disease, ulcerative colitis, and Kawasaki disease.

The protein localises to the secreted. It is found in the cytoplasm. It localises to the cytoskeleton. The protein resides in the cell membrane. Its function is as follows. S100A12 is a calcium-, zinc- and copper-binding protein which plays a prominent role in the regulation of inflammatory processes and immune response. Its pro-inflammatory activity involves recruitment of leukocytes, promotion of cytokine and chemokine production, and regulation of leukocyte adhesion and migration. Acts as an alarmin or a danger associated molecular pattern (DAMP) molecule and stimulates innate immune cells via binding to receptor for advanced glycation endproducts (AGER). Binding to AGER activates the MAP-kinase and NF-kappa-B signaling pathways leading to production of pro-inflammatory cytokines and up-regulation of cell adhesion molecules ICAM1 and VCAM1. Acts as a monocyte and mast cell chemoattractant. Can stimulate mast cell degranulation and activation which generates chemokines, histamine and cytokines inducing further leukocyte recruitment to the sites of inflammation. Can inhibit the activity of matrix metalloproteinases; MMP2, MMP3 and MMP9 by chelating Zn(2+) from their active sites. Possesses filariacidal and filariastatic activity. Calcitermin possesses antifungal activity against C.albicans and is also active against E.coli and P.aeruginosa but not L.monocytogenes and S.aureus. This is Protein S100-A12 (S100A12) from Homo sapiens (Human).